The chain runs to 130 residues: Tripartite terminase subunit 2 (130 aa).

It belongs to the herpesviridae TRM2 protein family. In terms of assembly, associates with TRM1 and TRM3 to form the tripartite terminase complex.

It localises to the host nucleus. Its function is as follows. Component of the molecular motor that translocates viral genomic DNA in empty capsid during DNA packaging. Forms a tripartite terminase complex together with TRM1 and TRM3 in the host cytoplasm. Once the complex reaches the host nucleus, it interacts with the capsid portal vertex. This portal forms a ring in which genomic DNA is translocated into the capsid. This chain is Tripartite terminase subunit 2, found in Homo sapiens (Human).